Consider the following 454-residue polypeptide: MNRRRERVVVVGAGLAGSLAALYLARQGHEVDIFERRPDPRSALAGPEGRSINLGLSARGMRALDGVGLLADVLKHSVPMRDRVVHSPDGGVRAQPYGVREHEILHSVLREELISLVVSAAEAEPGVRFHFDSLLTSLDRETGTVRVAPTAGGEASTVTADLVVGADGVFSTVRQQMQHGLRANYAQDFLPWGYKELTIPVGTDGQPRVRLEALHVWPGHEALMVAHPNRDGSLTCTLFMAHEGPVSFAALDTPAAVRDFFRRRFPDAEELMPDLVREITEHPVGHLVTVRTAPWRYADRVVLIGDAAHAVYPFYGQGMNSAFEDCVVLDECLTAHPDRAAALAAYEAARKPHTDVLADLSTANFEDLRDRVHRLGYSASAAADRLLARLLPQRWVPLYAMVAHTTIPYADALARANRQDRILRRAGAGLTLAVGLAATAAALRVGRRRRAARR.

Belongs to the aromatic-ring hydroxylase family. KMO subfamily. FAD serves as cofactor.

It catalyses the reaction L-kynurenine + NADPH + O2 + H(+) = 3-hydroxy-L-kynurenine + NADP(+) + H2O. Its pathway is cofactor biosynthesis; NAD(+) biosynthesis; quinolinate from L-kynurenine: step 1/3. Catalyzes the hydroxylation of L-kynurenine (L-Kyn) to form 3-hydroxy-L-kynurenine (L-3OHKyn). Required for synthesis of quinolinic acid. This Salinispora arenicola (strain CNS-205) protein is Kynurenine 3-monooxygenase.